Reading from the N-terminus, the 427-residue chain is Probable purple acid phosphatase 20 (427 aa).

A signal peptide spans 1–21; that stretch reads MVKVLGLVAILLIVLAGNVLS. A glycan (N-linked (GlcNAc...) asparagine) is linked at Asn85. The Fe cation site is built by Asp147, Asp174, and Tyr177. Residue Asp174 coordinates Zn(2+). 2 residues coordinate Zn(2+): Asn207 and His291. Asn207 provides a ligand contact to substrate. Catalysis depends on His301, which acts as the Proton donor. His330 contacts Zn(2+). 330 to 332 contacts substrate; the sequence is HVH. Fe cation is bound at residue His332. An N-linked (GlcNAc...) asparagine glycan is attached at Asn392.

The protein belongs to the metallophosphoesterase superfamily. Purple acid phosphatase family. As to quaternary structure, homodimer. The cofactor is Fe cation. It depends on Zn(2+) as a cofactor. As to expression, expressed flowers and siliques.

The protein resides in the secreted. It catalyses the reaction a phosphate monoester + H2O = an alcohol + phosphate. This Arabidopsis thaliana (Mouse-ear cress) protein is Probable purple acid phosphatase 20 (PAP20).